The chain runs to 361 residues: Outer mitochondrial transmembrane helix translocase (361 aa).

The Mitochondrial intermembrane segment spans residues 1 to 15 (MVHAEAFSRPLSRNE). A helical transmembrane segment spans residues 16–32 (VVGLIFRLTIFGAVTYF). Topologically, residues 33–361 (TIKWMVDAID…QNVLTHVCLD (329 aa)) are cytoplasmic. 133–140 (GPPGCGKT) serves as a coordination point for ATP. Ser322 carries the post-translational modification Phosphoserine.

Belongs to the AAA ATPase family. MSP1 subfamily. In terms of assembly, interacts with GRIA2 and GRIP1 in an ATP-dependent manner. ATAD1-catalyzed ATP hydrolysis disrupts not only its binding to GRIA2 and GRIP1, but also interaction between GRIP1 and GRIA2, leading to AMPAR complex disassembly.

The protein resides in the mitochondrion outer membrane. It localises to the peroxisome membrane. It is found in the postsynaptic cell membrane. It catalyses the reaction [protein]-with a C-terminal TM segment(out) + ATP + H2O = [protein]-with a C-terminal TM segment(in) + ADP + phosphate + H(+). Outer mitochondrial translocase required to remove mislocalized tail-anchored transmembrane proteins on mitochondria. Specifically recognizes and binds tail-anchored transmembrane proteins: acts as a dislocase that mediates the ATP-dependent extraction of mistargeted tail-anchored transmembrane proteins from the mitochondrion outer membrane. Also plays a critical role in regulating the surface expression of AMPA receptors (AMPAR), thereby regulating synaptic plasticity and learning and memory. Required for NMDA-stimulated AMPAR internalization and inhibition of GRIA1 and GRIA2 recycling back to the plasma membrane; these activities are ATPase-dependent. This is Outer mitochondrial transmembrane helix translocase from Homo sapiens (Human).